The chain runs to 227 residues: Phosphoribosylaminoimidazole-succinocarboxamide synthase (227 aa).

Belongs to the SAICAR synthetase family.

It carries out the reaction 5-amino-1-(5-phospho-D-ribosyl)imidazole-4-carboxylate + L-aspartate + ATP = (2S)-2-[5-amino-1-(5-phospho-beta-D-ribosyl)imidazole-4-carboxamido]succinate + ADP + phosphate + 2 H(+). It participates in purine metabolism; IMP biosynthesis via de novo pathway; 5-amino-1-(5-phospho-D-ribosyl)imidazole-4-carboxamide from 5-amino-1-(5-phospho-D-ribosyl)imidazole-4-carboxylate: step 1/2. The chain is Phosphoribosylaminoimidazole-succinocarboxamide synthase from Clostridium tetani (strain Massachusetts / E88).